We begin with the raw amino-acid sequence, 342 residues long: Heat-inducible transcription repressor HrcA (342 aa).

It belongs to the HrcA family.

Its function is as follows. Negative regulator of class I heat shock genes (grpE-dnaK-dnaJ and groELS operons). Prevents heat-shock induction of these operons. This Dechloromonas aromatica (strain RCB) protein is Heat-inducible transcription repressor HrcA.